Here is a 427-residue protein sequence, read N- to C-terminus: Male abnormal protein mab-31 (427 aa).

The interval 68–102 (PIGTGRFPNPSPPRSSSGTNTPIRKTPGSRPDRGK) is disordered.

Its subcellular location is the nucleus. In terms of biological role, putative transcription factor. Acts in a TGF-beta-like pathway during development of male-specific genital sensilla (simple sense organs), known as rays. Involved in production of reactive oxygen species (ROS), acting downstream of the TGF-beta-like dbl-1 signaling pathway. Involved in locomotory behavior. The chain is Male abnormal protein mab-31 from Caenorhabditis elegans.